The sequence spans 37 residues: Esculentin-2B (37 aa).

A disulfide bridge links Cys31 with Cys37.

Expressed by the skin glands.

It localises to the secreted. Functionally, antibacterial activity against Gram-positive bacterium S.aureus and Gram-negative bacterium E.coli. Has activity against C.albicans. The chain is Esculentin-2B from Lithobates berlandieri (Rio Grande leopard frog).